The chain runs to 310 residues: Prephenate dehydratase (310 aa).

The 188-residue stretch at 3–190 (RIAYLGPEGT…ARTRFVLVGL (188 aa)) folds into the Prephenate dehydratase domain. An ACT domain is found at 204-281 (AVVLRLVNEP…VDVRYLGSWP (78 aa)).

As to quaternary structure, homodimer.

It carries out the reaction prephenate + H(+) = 3-phenylpyruvate + CO2 + H2O. Its pathway is amino-acid biosynthesis; L-phenylalanine biosynthesis; phenylpyruvate from prephenate: step 1/1. In Mycolicibacterium smegmatis (strain ATCC 700084 / mc(2)155) (Mycobacterium smegmatis), this protein is Prephenate dehydratase (pheA).